The chain runs to 378 residues: Succinyl-diaminopimelate desuccinylase (378 aa).

H68 contributes to the Zn(2+) binding site. D70 is a catalytic residue. D101 is a Zn(2+) binding site. E135 serves as the catalytic Proton acceptor. The Zn(2+) site is built by E136, E164, and H350.

Belongs to the peptidase M20A family. DapE subfamily. Homodimer. Requires Zn(2+) as cofactor. The cofactor is Co(2+).

It carries out the reaction N-succinyl-(2S,6S)-2,6-diaminopimelate + H2O = (2S,6S)-2,6-diaminopimelate + succinate. The protein operates within amino-acid biosynthesis; L-lysine biosynthesis via DAP pathway; LL-2,6-diaminopimelate from (S)-tetrahydrodipicolinate (succinylase route): step 3/3. In terms of biological role, catalyzes the hydrolysis of N-succinyl-L,L-diaminopimelic acid (SDAP), forming succinate and LL-2,6-diaminopimelate (DAP), an intermediate involved in the bacterial biosynthesis of lysine and meso-diaminopimelic acid, an essential component of bacterial cell walls. In Vibrio parahaemolyticus serotype O3:K6 (strain RIMD 2210633), this protein is Succinyl-diaminopimelate desuccinylase.